The sequence spans 53 residues: UPF0391 membrane protein PA5482 (53 aa).

The next 2 helical transmembrane spans lie at 4-24 (WAIT…GGIA) and 29-49 (GIAK…FFFG).

It belongs to the UPF0391 family.

It localises to the cell membrane. The sequence is that of UPF0391 membrane protein PA5482 from Pseudomonas aeruginosa (strain ATCC 15692 / DSM 22644 / CIP 104116 / JCM 14847 / LMG 12228 / 1C / PRS 101 / PAO1).